Here is a 317-residue protein sequence, read N- to C-terminus: Probable cell division protein WhiA (317 aa).

The segment at residues 281 to 314 is a DNA-binding region (H-T-H motif); sequence TLKELGEMINPPIGKSGVNHRLRKLDQIADRERG.

Belongs to the WhiA family.

In terms of biological role, involved in cell division and chromosome segregation. The protein is Probable cell division protein WhiA of Alkaliphilus metalliredigens (strain QYMF).